Here is a 355-residue protein sequence, read N- to C-terminus: NADH-quinone oxidoreductase subunit H (355 aa).

8 consecutive transmembrane segments (helical) span residues 17–37 (IIMV…IAYI), 86–106 (GVFL…WAVI), 119–139 (VGIL…IMAG), 165–185 (IGFV…SAVV), 204–224 (ILNW…VSAL), 262–282 (YVAI…GWLP), 291–311 (WVPG…LFAM), and 332–352 (FLPL…FAGI).

This sequence belongs to the complex I subunit 1 family. NDH-1 is composed of 14 different subunits. Subunits NuoA, H, J, K, L, M, N constitute the membrane sector of the complex.

It localises to the cell inner membrane. It catalyses the reaction a quinone + NADH + 5 H(+)(in) = a quinol + NAD(+) + 4 H(+)(out). Functionally, NDH-1 shuttles electrons from NADH, via FMN and iron-sulfur (Fe-S) centers, to quinones in the respiratory chain. The immediate electron acceptor for the enzyme in this species is believed to be ubiquinone. Couples the redox reaction to proton translocation (for every two electrons transferred, four hydrogen ions are translocated across the cytoplasmic membrane), and thus conserves the redox energy in a proton gradient. This subunit may bind ubiquinone. The sequence is that of NADH-quinone oxidoreductase subunit H from Bradyrhizobium diazoefficiens (strain JCM 10833 / BCRC 13528 / IAM 13628 / NBRC 14792 / USDA 110).